Consider the following 899-residue polypeptide: 1,4-alpha-glucan-branching enzyme 3, chloroplastic/amyloplastic (899 aa).

Residues 1–49 (MVSLSNQTRFSFHPNNLVVSEKRRLGISGVNFPRKIKLKITCFAAERPR) constitute a chloroplast transit peptide. The tract at residues 47–67 (RPRQEKQKKKSQSQSTSDAEA) is disordered. Glu-612 functions as the Proton donor in the catalytic mechanism.

Belongs to the glycosyl hydrolase 13 family. GlgB subfamily. As to quaternary structure, monomer. Mostly expressed in flowers and inflorescence, and, to a lower extent, in seedlings, roots, stems, leaves, siliques and seeds.

It localises to the plastid. The protein resides in the chloroplast stroma. Its subcellular location is the amyloplast. The enzyme catalyses Transfers a segment of a (1-&gt;4)-alpha-D-glucan chain to a primary hydroxy group in a similar glucan chain.. The protein operates within glycan biosynthesis; starch biosynthesis. Its function is as follows. Catalyzes the formation of the alpha-1,6-glucosidic linkages in starch by scission of a 1,4-alpha-linked oligosaccharide from growing alpha-1,4-glucan chains and the subsequent attachment of the oligosaccharide to the alpha-1,6 position. Essential during embryogenesis. In Arabidopsis thaliana (Mouse-ear cress), this protein is 1,4-alpha-glucan-branching enzyme 3, chloroplastic/amyloplastic (SBE3).